The chain runs to 142 residues: Large ribosomal subunit protein uL13 (142 aa).

It belongs to the universal ribosomal protein uL13 family. Part of the 50S ribosomal subunit.

This protein is one of the early assembly proteins of the 50S ribosomal subunit, although it is not seen to bind rRNA by itself. It is important during the early stages of 50S assembly. This is Large ribosomal subunit protein uL13 from Psychrobacter cryohalolentis (strain ATCC BAA-1226 / DSM 17306 / VKM B-2378 / K5).